We begin with the raw amino-acid sequence, 551 residues long: Membrane protein insertase YidC (551 aa).

The helical transmembrane segment at 3-23 threads the bilayer; that stretch reads ANHIRILLLVTIAIMFISLMG. Residues 33–47 are compositionally biased toward polar residues; the sequence is NTKQQTSATQNNSHY. The segment at 33 to 59 is disordered; the sequence is NTKQQTSATQNNSHYDNADSSTNTDVT. Over residues 50–59 the composition is skewed to low complexity; it reads ADSSTNTDVT. 3 helical membrane passes run 361-381, 431-451, and 504-524; these read LVGNWGLAIILVTCLIKLIFY, LSGCLPMLIQIPIFISLYWVL, and VMMFLPVIFTFLFASFPSGLV.

It belongs to the OXA1/ALB3/YidC family. Type 1 subfamily. As to quaternary structure, interacts with the Sec translocase complex via SecD. Specifically interacts with transmembrane segments of nascent integral membrane proteins during membrane integration.

The protein resides in the cell inner membrane. Required for the insertion and/or proper folding and/or complex formation of integral membrane proteins into the membrane. Involved in integration of membrane proteins that insert both dependently and independently of the Sec translocase complex, as well as at least some lipoproteins. Aids folding of multispanning membrane proteins. The protein is Membrane protein insertase YidC of Francisella tularensis subsp. tularensis (strain SCHU S4 / Schu 4).